The primary structure comprises 264 residues: Thymidylate synthase (264 aa).

Residue R21 coordinates dUMP. H51 lines the (6R)-5,10-methylene-5,6,7,8-tetrahydrofolate pocket. R126–R127 provides a ligand contact to dUMP. The active-site Nucleophile is the C146. Residues R166–D169, N177, and H207–Y209 contribute to the dUMP site. D169 serves as a coordination point for (6R)-5,10-methylene-5,6,7,8-tetrahydrofolate. A263 lines the (6R)-5,10-methylene-5,6,7,8-tetrahydrofolate pocket.

The protein belongs to the thymidylate synthase family. Bacterial-type ThyA subfamily. As to quaternary structure, homodimer.

Its subcellular location is the cytoplasm. It catalyses the reaction dUMP + (6R)-5,10-methylene-5,6,7,8-tetrahydrofolate = 7,8-dihydrofolate + dTMP. Its pathway is pyrimidine metabolism; dTTP biosynthesis. Catalyzes the reductive methylation of 2'-deoxyuridine-5'-monophosphate (dUMP) to 2'-deoxythymidine-5'-monophosphate (dTMP) while utilizing 5,10-methylenetetrahydrofolate (mTHF) as the methyl donor and reductant in the reaction, yielding dihydrofolate (DHF) as a by-product. This enzymatic reaction provides an intracellular de novo source of dTMP, an essential precursor for DNA biosynthesis. This Legionella pneumophila (strain Paris) protein is Thymidylate synthase.